Reading from the N-terminus, the 673-residue chain is NACHT, LRR and PYD domains-containing protein 10 (673 aa).

The 92-residue stretch at 1-92 (MALARANSPQ…VDYLNQVCLN (92 aa)) folds into the Pyrin domain. The 307-residue stretch at 163–469 (PIVVMQGSAG…AMSFLVKEDQ (307 aa)) folds into the NACHT domain. 169 to 176 (GSAGTGKT) provides a ligand contact to ATP. Residues 578 to 673 (SDKKKSVSVT…DGEMIDKMNG (96 aa)) form a disordered region. Low complexity predominate over residues 584–597 (VSVTSSFSSGKVQS). Basic and acidic residues predominate over residues 633 to 648 (ASREKGHMEMNDKEDG). Residues 649–658 (GVEEQEDEEG) show a composition bias toward acidic residues. Residues 659-673 (QTLKKDGEMIDKMNG) show a composition bias toward basic and acidic residues.

The protein belongs to the NLRP family. In terms of assembly, oligomerizes. Interacts with PYCARD. Also interacts with CASP1 and IL1B. Interacts with NOD1 and components of the NOD1 signaling pathway including RIPK2, NR2C2/TAK1 and IKBKG/NEMO. As to expression, expressed in skin, tongue, heart, colon and several cell lines of hematopoietic and myocytic origin but not in kidney, skeletal muscle, spleen, liver, lung, thymus, brain or small intestine (at protein level).

It is found in the cytoplasm. The protein localises to the cell membrane. In terms of biological role, inhibits autoprocessing of CASP1, CASP1-dependent IL1B secretion, PYCARD aggregation and PYCARD-mediated apoptosis but not apoptosis induced by FAS or BID. Displays anti-inflammatory activity. Required for immunity against C.albicans infection. Involved in the innate immune response by contributing to pro-inflammatory cytokine release in response to invasive bacterial infection. Contributes to T-cell-mediated inflammatory responses in the skin. Plays a role in protection against periodontitis through its involvement in induction of IL1A via ERK activation in oral epithelial cells infected with periodontal pathogens. Exhibits both ATPase and GTPase activities. The sequence is that of NACHT, LRR and PYD domains-containing protein 10 (Nlrp10) from Mus musculus (Mouse).